The sequence spans 77 residues: Large ribosomal subunit protein bL28 (77 aa).

It belongs to the bacterial ribosomal protein bL28 family.

This is Large ribosomal subunit protein bL28 from Leptothrix cholodnii (strain ATCC 51168 / LMG 8142 / SP-6) (Leptothrix discophora (strain SP-6)).